A 469-amino-acid polypeptide reads, in one-letter code: ATP synthase subunit beta (469 aa).

155-162 provides a ligand contact to ATP; sequence GGAGVGKT.

The protein belongs to the ATPase alpha/beta chains family. In terms of assembly, F-type ATPases have 2 components, CF(1) - the catalytic core - and CF(0) - the membrane proton channel. CF(1) has five subunits: alpha(3), beta(3), gamma(1), delta(1), epsilon(1). CF(0) has three main subunits: a(1), b(2) and c(9-12). The alpha and beta chains form an alternating ring which encloses part of the gamma chain. CF(1) is attached to CF(0) by a central stalk formed by the gamma and epsilon chains, while a peripheral stalk is formed by the delta and b chains.

Its subcellular location is the cell inner membrane. It carries out the reaction ATP + H2O + 4 H(+)(in) = ADP + phosphate + 5 H(+)(out). Produces ATP from ADP in the presence of a proton gradient across the membrane. The catalytic sites are hosted primarily by the beta subunits. This is ATP synthase subunit beta from Thermosipho melanesiensis (strain DSM 12029 / CIP 104789 / BI429).